Consider the following 677-residue polypeptide: Methionine--tRNA ligase (677 aa).

A 'HIGH' region motif is present at residues 15-25 (PYANGSIHLGH). 4 residues coordinate Zn(2+): Cys146, Cys149, Cys159, and Cys162. Positions 333 to 337 (KMSKS) match the 'KMSKS' region motif. ATP is bound at residue Lys336. A tRNA-binding domain is found at 575-677 (DFAKVDLRVA…AGAKPGHQVK (103 aa)).

Belongs to the class-I aminoacyl-tRNA synthetase family. MetG type 1 subfamily. Homodimer. Zn(2+) serves as cofactor.

The protein localises to the cytoplasm. It carries out the reaction tRNA(Met) + L-methionine + ATP = L-methionyl-tRNA(Met) + AMP + diphosphate. Functionally, is required not only for elongation of protein synthesis but also for the initiation of all mRNA translation through initiator tRNA(fMet) aminoacylation. The protein is Methionine--tRNA ligase of Escherichia fergusonii (strain ATCC 35469 / DSM 13698 / CCUG 18766 / IAM 14443 / JCM 21226 / LMG 7866 / NBRC 102419 / NCTC 12128 / CDC 0568-73).